Consider the following 831-residue polypeptide: Cysteine--tRNA ligase, cytoplasmic (831 aa).

Alanine 2 carries the N-acetylalanine modification. Phosphoserine is present on serine 102. Cysteine 138 is a binding site for Zn(2+). Glycine 139 provides a ligand contact to L-cysteine. The short motif at 140–150 is the 'HIGH' region element; that stretch reads PTVYDASHMGH. Threonine 179 contacts L-cysteine. A 'KIIK' region motif is present at residues 184–187; that stretch reads KIIR. A phosphoserine mark is found at serine 388 and serine 390. Residues cysteine 431, histidine 456, and glutamate 460 each coordinate Zn(2+). Histidine 456 lines the L-cysteine pocket. The short motif at 489–493 is the 'KMSKS' region element; the sequence is KMSKS. Lysine 492 is a binding site for ATP. The segment covering 736-762 has biased composition (basic and acidic residues); the sequence is GKKRAEEEKRRKKEEAARKKQEQEAAK. The tract at residues 736–766 is disordered; it reads GKKRAEEEKRRKKEEAARKKQEQEAAKLAKM. The residue at position 829 (serine 829) is a Phosphoserine.

This sequence belongs to the class-I aminoacyl-tRNA synthetase family. Homodimer. Zn(2+) serves as cofactor.

The protein localises to the cytoplasm. It catalyses the reaction tRNA(Cys) + L-cysteine + ATP = L-cysteinyl-tRNA(Cys) + AMP + diphosphate. Functionally, catalyzes the ATP-dependent ligation of cysteine to tRNA(Cys). The polypeptide is Cysteine--tRNA ligase, cytoplasmic (Cars1) (Mus musculus (Mouse)).